We begin with the raw amino-acid sequence, 179 residues long: Large ribosomal subunit protein uL6 (179 aa).

The protein belongs to the universal ribosomal protein uL6 family. In terms of assembly, part of the 50S ribosomal subunit.

This protein binds to the 23S rRNA, and is important in its secondary structure. It is located near the subunit interface in the base of the L7/L12 stalk, and near the tRNA binding site of the peptidyltransferase center. This is Large ribosomal subunit protein uL6 from Treponema pallidum (strain Nichols).